The primary structure comprises 408 residues: Guanine nucleotide-binding protein alpha-14 subunit (408 aa).

GTP contacts are provided by residues His-38–Lys-45, Gly-78–Ser-85, Asn-201–Lys-205, Val-216–Thr-222, Asp-241–Gln-245, Phe-285–Phe-288, Asn-325–Asp-328, and Ala-380. A G-alpha domain is found at Ser-70–Ser-408. The tract at residues Lys-73–Thr-86 is G1 motif. Ser-85 is a binding site for Mg(2+). Residues Asp-214–Thr-222 are G2 motif. Residue Thr-222 coordinates Mg(2+). The segment at Leu-237–Arg-246 is G3 motif. A G4 motif region spans residues Leu-321–Asp-328. Residues Thr-378 to Thr-383 form a G5 motif region.

Belongs to the G-alpha family. As to quaternary structure, g proteins are composed of 3 units; alpha, beta and gamma. The alpha chain contains the guanine nucleotide binding site.

Functionally, guanine nucleotide-binding proteins (G proteins) are involved as modulators or transducers in various transmembrane signaling systems. This is Guanine nucleotide-binding protein alpha-14 subunit (gpa-14) from Caenorhabditis briggsae.